Consider the following 196-residue polypeptide: Chromophore lyase CpcT/CpeT (196 aa).

Belongs to the CpcT/CpeT biliprotein lyase family.

Its function is as follows. Covalently attaches a chromophore to Cys residue(s) of phycobiliproteins. This chain is Chromophore lyase CpcT/CpeT, found in Thermosynechococcus vestitus (strain NIES-2133 / IAM M-273 / BP-1).